The sequence spans 167 residues: Large ribosomal subunit protein uL10 (167 aa).

Belongs to the universal ribosomal protein uL10 family. In terms of assembly, part of the ribosomal stalk of the 50S ribosomal subunit. The N-terminus interacts with L11 and the large rRNA to form the base of the stalk. The C-terminus forms an elongated spine to which L12 dimers bind in a sequential fashion forming a multimeric L10(L12)X complex.

Forms part of the ribosomal stalk, playing a central role in the interaction of the ribosome with GTP-bound translation factors. In Chromohalobacter salexigens (strain ATCC BAA-138 / DSM 3043 / CIP 106854 / NCIMB 13768 / 1H11), this protein is Large ribosomal subunit protein uL10.